A 1104-amino-acid chain; its full sequence is Transient receptor potential cation channel subfamily M member 8 (1104 aa).

Residues 1 to 733 (MSFEGARLSM…LWYYVAFFTS (733 aa)) are Cytoplasmic-facing. Residues 734–758 (PFVVFSWNVVFYIAFLLLFAYVLLM) traverse the membrane as a helical segment. Residues 759–765 (DFHSVPH) are Extracellular-facing. The chain crosses the membrane as a helical span at residues 766–789 (TPELILYALVFVLFCDEVRQWYMN). Residues E782 and Q785 each coordinate Ca(2+). Over 790-796 (GVNYFTD) the chain is Cytoplasmic. The helical transmembrane segment at 797–817 (LWNVMDTLGLFYFIAGIVFRL) threads the bilayer. Ca(2+)-binding residues include N799 and D802. Residues 818–822 (HSSNK) are Extracellular-facing. Residues 823 to 848 (SSLYSGRVIFCLDYIIFTLRLIHIFT) traverse the membrane as a helical segment. The Cytoplasmic portion of the chain corresponds to 849 to 853 (VSRNL). The chain crosses the membrane as a helical span at residues 854–890 (GPKIIMLQRMLIDVFFFLFLFAVWMVAFGVARQGILR). The Extracellular portion of the chain corresponds to 891-895 (QNEQR). The segment at residues 896–912 (WRWIFRSVIYEPYLAMF) is an intramembrane region (pore-forming). Over 913-953 (GQVPSDVDSTTYDFSHCTFSGNESKPLCVELDEYNLPRFPE) the chain is Extracellular. The chain crosses the membrane as a helical span at residues 954–984 (WITIPLVCIYMLSTNILLVNLLVAMFGYTVG). At 985 to 1104 (IVQENNDQVW…LLKEIANKIK (120 aa)) the chain is on the cytoplasmic side. Positions 1067–1104 (INTKANDNAEEMRHRFRQLDTKLNDLKGLLKEIANKIK) form a coiled coil.

The protein belongs to the transient receptor (TC 1.A.4) family. LTrpC subfamily. TRPM8 sub-subfamily. As to quaternary structure, homotetramer. Interacts (via N-terminus and C-terminus domains) with TCAF1; the interaction stimulates TRPM8 channel activity. Interacts (via N-terminus and C-terminus domains) with TCAF2; the interaction inhibits TRPM8 channel activity. Expressed in dorsal root and trigeminal ganglia. Specifically expressed in a subset of sensory neurons, including cold-sensitive neurons in trigeminal neurons.

The protein resides in the cell membrane. Its subcellular location is the membrane raft. The enzyme catalyses Ca(2+)(in) = Ca(2+)(out). It catalyses the reaction Na(+)(in) = Na(+)(out). The catalysed reaction is K(+)(in) = K(+)(out). Its activity is regulated as follows. Activated by cold temperatures and by both natural and synthetic cooling compounds such as menthol and icilin. Activation of the channel requires the presence of PI(4,5)P2; PI(4,5)P2 is necessary to gate the channel. Activated by intracellular Ca(2+). In terms of biological role, non-selective ion channel permeable to monovalent and divalent cations, including Na(+), K(+), and Ca(2+), with higher permeability for Ca(2+). Activated by multiple factors, such as temperature, voltage, pressure, and changes in osmolality. Activated by cool temperatures (&lt;23-28 degrees Celsius) and by chemical ligands evoking a sensation of coolness, such as menthol and icilin, therefore plays a central role in the detection of environmental cold temperatures. TRPM8 is a voltage-dependent channel; its activation by cold or chemical ligands shifts its voltage thresholds towards physiological membrane potentials, leading to the opening of the channel. In addition to its critical role in temperature sensing, regulates basal tear secretion by sensing evaporation-induced cooling and changes in osmolality. The chain is Transient receptor potential cation channel subfamily M member 8 (Trpm8) from Rattus norvegicus (Rat).